A 506-amino-acid polypeptide reads, in one-letter code: Nostrin (506 aa).

The F-BAR domain occupies 1 to 260 (MRDPLTDCPY…AISKIDIEKD (260 aa)). Residue serine 114 is modified to Phosphoserine. The stretch at 160–222 (SMTEKEKRKL…LELEKERIQL (63 aa)) forms a coiled coil. The region spanning 292 to 372 (AMDKERRKSL…SYKLSSMLAE (81 aa)) is the REM-1 domain. In terms of domain architecture, SH3 spans 438 to 497 (LSSRLCKALYSFQARQDDELNLEKGDIVIIHEKKEGGWWFGSLNGKKGHFPAAYVEELPS). Position 479 is a phosphoserine (serine 479).

Homotrimer. Interacts with DAB2. Interacts with NOS3, DNM2, WASL and CAV1. Interacts (via SH3 domain) with DNM2; this interaction allows the recruitment of NOS3 to dynamin-positive structures. In terms of tissue distribution, expressed at highest levels in heart, kidney, placenta and lung, and at lowest levels in brain, thymus and spleen. Present in vascular endothelial cells and placenta. Over-expressed in placenta from women with pre-eclampsia (at protein level).

It localises to the cell membrane. Its subcellular location is the cytoplasmic vesicle. It is found in the cytoplasm. The protein localises to the cytoskeleton. The protein resides in the nucleus. Its function is as follows. Multivalent adapter protein which may decrease NOS3 activity by inducing its translocation away from the plasma membrane. This is Nostrin from Homo sapiens (Human).